We begin with the raw amino-acid sequence, 340 residues long: Heat-inducible transcription repressor HrcA (340 aa).

The protein belongs to the HrcA family.

Negative regulator of class I heat shock genes (grpE-dnaK-dnaJ and groELS operons). Prevents heat-shock induction of these operons. In Phytoplasma australiense, this protein is Heat-inducible transcription repressor HrcA.